The sequence spans 216 residues: MADLKVGSTVGGSVIWHQGNFPLNSAGDDVLYKSFKIYSEYNKPQAADNDFVSKANGGTYTGPITINYGVNSYLQLSNNETPIRIRSGGGTGNTLVVGGSSGGISFRPAGSEITTGQITITPEGLTTFTRAVTAPSITVTSTPSAASDVTRKDYVDGAINTVTANANSRVLRSGDTMTGNLTAPNLFSQNPASQPSHVPRFDQIVIKDSVQDFGYY.

In terms of assembly, the distal half-fiber contains two molecules each of Gp36 and Gp37 and one molecule of Gp35.

It localises to the virion. Functionally, structural component of the distal-half tail fiber. This is Tail fiber protein p36 (36) from Enterobacteria phage Ox2 (Bacteriophage Ox2).